We begin with the raw amino-acid sequence, 309 residues long: 4-hydroxy-tetrahydrodipicolinate synthase (309 aa).

Thr-51 is a binding site for pyruvate. Tyr-140 serves as the catalytic Proton donor/acceptor. Lys-168 serves as the catalytic Schiff-base intermediate with substrate. Residue Ile-209 coordinates pyruvate.

Belongs to the DapA family. As to quaternary structure, homotetramer; dimer of dimers.

Its subcellular location is the cytoplasm. The catalysed reaction is L-aspartate 4-semialdehyde + pyruvate = (2S,4S)-4-hydroxy-2,3,4,5-tetrahydrodipicolinate + H2O + H(+). The protein operates within amino-acid biosynthesis; L-lysine biosynthesis via DAP pathway; (S)-tetrahydrodipicolinate from L-aspartate: step 3/4. In terms of biological role, catalyzes the condensation of (S)-aspartate-beta-semialdehyde [(S)-ASA] and pyruvate to 4-hydroxy-tetrahydrodipicolinate (HTPA). The polypeptide is 4-hydroxy-tetrahydrodipicolinate synthase (Streptococcus uberis (strain ATCC BAA-854 / 0140J)).